Here is a 278-residue protein sequence, read N- to C-terminus: 3-methyl-2-oxobutanoate hydroxymethyltransferase (278 aa).

Positions 43 and 82 each coordinate Mg(2+). 3-methyl-2-oxobutanoate-binding positions include 43–44 (DS), Asp82, and Lys112. Glu114 contacts Mg(2+). Glu181 functions as the Proton acceptor in the catalytic mechanism.

Belongs to the PanB family. In terms of assembly, homodecamer; pentamer of dimers. Requires Mg(2+) as cofactor.

It localises to the cytoplasm. It catalyses the reaction 3-methyl-2-oxobutanoate + (6R)-5,10-methylene-5,6,7,8-tetrahydrofolate + H2O = 2-dehydropantoate + (6S)-5,6,7,8-tetrahydrofolate. Its pathway is cofactor biosynthesis; (R)-pantothenate biosynthesis; (R)-pantoate from 3-methyl-2-oxobutanoate: step 1/2. In terms of biological role, catalyzes the reversible reaction in which hydroxymethyl group from 5,10-methylenetetrahydrofolate is transferred onto alpha-ketoisovalerate to form ketopantoate. The chain is 3-methyl-2-oxobutanoate hydroxymethyltransferase from Desulfitobacterium hafniense (strain DSM 10664 / DCB-2).